The primary structure comprises 527 residues: Laccase-5 (527 aa).

The first 23 residues, 1-23 (MGKYHSFVNVVALSLSLSGRVFG), serve as a signal peptide directing secretion. Residues 25–150 (IGPVTDLTIS…DGLRGPLVVY (126 aa)) form the Plastocyanin-like 1 domain. N-linked (GlcNAc...) asparagine glycans are attached at residues N74 and N77. Cu cation contacts are provided by H87, H89, H132, and H134. 2 disulfides stabilise this stretch: C108–C516 and C140–C230. N156, N209, N233, N242, N276, N317, N358, N366, N393, and N402 each carry an N-linked (GlcNAc...) asparagine glycan. In terms of domain architecture, Plastocyanin-like 2 spans 162–306 (VDDDTTVITL…GGVNSAILRY (145 aa)). The Plastocyanin-like 3 domain occupies 373-498 (TVPVLLQILS…AGFAIVWGED (126 aa)). Residues H425, H428, H430, H480, C481, H482, and H486 each contribute to the Cu cation site.

The protein belongs to the multicopper oxidase family. As to quaternary structure, homodimer. Requires Cu cation as cofactor.

Its subcellular location is the secreted. It carries out the reaction 4 hydroquinone + O2 = 4 benzosemiquinone + 2 H2O. Its function is as follows. Lignin degradation and detoxification of lignin-derived products. The sequence is that of Laccase-5 (LCC5) from Trametes villosa (White-rot fungus).